The following is a 186-amino-acid chain: Probable RNA 2'-phosphotransferase (186 aa).

This sequence belongs to the KptA/TPT1 family.

In terms of biological role, removes the 2'-phosphate from RNA via an intermediate in which the phosphate is ADP-ribosylated by NAD followed by a presumed transesterification to release the RNA and generate ADP-ribose 1''-2''-cyclic phosphate (APPR&gt;P). May function as an ADP-ribosylase. The sequence is that of Probable RNA 2'-phosphotransferase from Clostridium perfringens (strain SM101 / Type A).